We begin with the raw amino-acid sequence, 48 residues long: Keratin-associated protein 22-1 (48 aa).

In terms of assembly, interacts with hair keratins.

In terms of biological role, in the hair cortex, hair keratin intermediate filaments are embedded in an interfilamentous matrix, consisting of hair keratin-associated proteins (KRTAP), which are essential for the formation of a rigid and resistant hair shaft through their extensive disulfide bond cross-linking with abundant cysteine residues of hair keratins. The matrix proteins include the high-sulfur and high-glycine-tyrosine keratins. The protein is Keratin-associated protein 22-1 (KRTAP22-1) of Homo sapiens (Human).